A 199-amino-acid chain; its full sequence is MVKMLVLYYSAYGHMEQMAKAAAEGAREGGAEITLKRVPELVPEEVAKASHYKIDQEAPIATPGELADYDAIIIGTATRYGMMASQMKNFLDQTGGLWAKGALINKVGSVMVSTATQYGGAELALISTQWQMQHHGMIIVPLSYAYREQMGNDVVRGGAPYGMTTTADGDGSRQPSAQELDGARFQGRRVAEITAKLHG.

One can recognise a Flavodoxin-like domain in the interval 4–190; the sequence is MLVLYYSAYG…DGARFQGRRV (187 aa). FMN contacts are provided by residues 10–15 and 78–80; these read SAYGHM and TRY. Tyrosine 12 is an NAD(+) binding site. Tryptophan 98 is a binding site for substrate. Residues 113–119 and histidine 134 contribute to the FMN site; that span reads STATQYG. Residues 162–181 form a disordered region; it reads GMTTTADGDGSRQPSAQELD. A compositionally biased stretch (polar residues) spans 163–177; the sequence is MTTTADGDGSRQPSA.

This sequence belongs to the WrbA family. It depends on FMN as a cofactor.

The catalysed reaction is a quinone + NADH + H(+) = a quinol + NAD(+). It carries out the reaction a quinone + NADPH + H(+) = a quinol + NADP(+). The chain is NAD(P)H dehydrogenase (quinone) from Brucella suis (strain ATCC 23445 / NCTC 10510).